The chain runs to 342 residues: Phosphate acyltransferase (342 aa).

It belongs to the PlsX family. Homodimer. Probably interacts with PlsY.

The protein resides in the cytoplasm. It carries out the reaction a fatty acyl-[ACP] + phosphate = an acyl phosphate + holo-[ACP]. The protein operates within lipid metabolism; phospholipid metabolism. Functionally, catalyzes the reversible formation of acyl-phosphate (acyl-PO(4)) from acyl-[acyl-carrier-protein] (acyl-ACP). This enzyme utilizes acyl-ACP as fatty acyl donor, but not acyl-CoA. This chain is Phosphate acyltransferase, found in Shewanella sp. (strain MR-4).